A 296-amino-acid polypeptide reads, in one-letter code: Large ribosomal subunit protein uL18B (296 aa).

The segment at 251–296 (PVHEKKPKKEVKKKRWNRAKLSLEQKKDRVAQKKASFLRAQEKADS) is disordered. Positions 255 to 268 (KKPKKEVKKKRWNR) are enriched in basic residues. Residues 271-281 (LSLEQKKDRVA) are compositionally biased toward basic and acidic residues.

It belongs to the universal ribosomal protein uL18 family. Component of the large ribosomal subunit (LSU). Part of a LSU subcomplex, the 5S RNP which is composed of the 5S RNA, RPL5 and RPL11.

It is found in the cytoplasm. The protein localises to the nucleus. It localises to the nucleolus. Its function is as follows. Component of the ribosome, a large ribonucleoprotein complex responsible for the synthesis of proteins in the cell. The small ribosomal subunit (SSU) binds messenger RNAs (mRNAs) and translates the encoded message by selecting cognate aminoacyl-transfer RNA (tRNA) molecules. The large subunit (LSU) contains the ribosomal catalytic site termed the peptidyl transferase center (PTC), which catalyzes the formation of peptide bonds, thereby polymerizing the amino acids delivered by tRNAs into a polypeptide chain. The nascent polypeptides leave the ribosome through a tunnel in the LSU and interact with protein factors that function in enzymatic processing, targeting, and the membrane insertion of nascent chains at the exit of the ribosomal tunnel. As part of the 5S RNP/5S ribonucleoprotein particle it is an essential component of the LSU, required for its formation and the maturation of rRNAs. It also couples ribosome biogenesis to p53/TP53 activation. As part of the 5S RNP it accumulates in the nucleoplasm and inhibits MDM2, when ribosome biogenesis is perturbed, mediating the stabilization and the activation of TP53. This chain is Large ribosomal subunit protein uL18B (rpl5-b), found in Xenopus laevis (African clawed frog).